Consider the following 356-residue polypeptide: Ferredoxin--NADP reductase (356 aa).

The FAD site is built by Thr25, Glu44, Gln52, Tyr57, Val97, Phe132, Asp298, and Ser339.

It belongs to the ferredoxin--NADP reductase type 2 family. Homodimer. Requires FAD as cofactor.

The catalysed reaction is 2 reduced [2Fe-2S]-[ferredoxin] + NADP(+) + H(+) = 2 oxidized [2Fe-2S]-[ferredoxin] + NADPH. This is Ferredoxin--NADP reductase from Chlorobaculum parvum (strain DSM 263 / NCIMB 8327) (Chlorobium vibrioforme subsp. thiosulfatophilum).